A 251-amino-acid polypeptide reads, in one-letter code: Flap endonuclease Xni (251 aa).

Positions 51 to 72 are disordered; it reads EDDRSDSWRHQSLPDYKAGRSP. Residue D104 coordinates Mg(2+). The 5'-3' exonuclease domain maps to 160–249; sequence VLPHQLPDYW…LSGNLQQLRL (90 aa). L171, A172, P180, V182, and I185 together coordinate K(+). The segment at 184 to 189 is interaction with DNA; the sequence is GIGAKT.

This sequence belongs to the Xni family. It depends on Mg(2+) as a cofactor. The cofactor is K(+).

Functionally, has flap endonuclease activity. During DNA replication, flap endonucleases cleave the 5'-overhanging flap structure that is generated by displacement synthesis when DNA polymerase encounters the 5'-end of a downstream Okazaki fragment. The sequence is that of Flap endonuclease Xni from Yersinia enterocolitica serotype O:8 / biotype 1B (strain NCTC 13174 / 8081).